A 464-amino-acid chain; its full sequence is MDNLRKLNLLSVSLTIIFVSLTIATNLPFFEVKYPNNNPFGMLLRPTPIKNQSLGLPAHVGSDECRVWTKACSDEILRLTYQPDNVAWLKRVRRTIHENPELAFEEYETSRLIRSELDRMGIMYRYPLAKTGIRAWIGSGGPPFVAVRADMDALPIQEAVEWEHISKVAGKMHACGHDAHVTMLLGAAHILKAREHLLKGTVVLLFQPAEEAGNGAKNMIEDGALDDVEAIFAVHVSHIHPTGVIGSRSGPLLAGCGIFRAVITSEDSRGAANLLLAASSAVISLQGIVSREASPLDSQVVSVTSFDGGHSLDVAPDTVVLGGTFRAFSNSSFYYLKKRIQEVLMDQVGVFGCQATVNFFEKQNAIYPPTTNNDATYNHLKKVTIDLLGDSHFTLAPQMMGAEDFAFYSEIIPAAFYFIGIRNEELGSVHIAHSPHFMIDEDSLPVGAAVHAAVAERYLNDKHS.

The signal sequence occupies residues 1-24 (MDNLRKLNLLSVSLTIIFVSLTIA). Mn(2+) is bound by residues Cys-175, His-177, Glu-211, His-235, and His-433.

The protein belongs to the peptidase M20 family.

The catalysed reaction is a jasmonyl-L-amino acid + H2O = a jasmonate + an L-alpha-amino acid. In terms of biological role, hydrolyzes certain amino acid conjugates of the plant growth regulator indole-3-acetic acid (IAA). Also hydrolyzes amino acid conjugates of jasmonic acid and 12-hydroxy jasmonic acid. The chain is IAA-amino acid hydrolase ILR1-like 6 from Arabidopsis thaliana (Mouse-ear cress).